The primary structure comprises 105 residues: Synaptic plasticity regulator PANTS (105 aa).

It belongs to the UPF0545 family. As to quaternary structure, interacts with RTN4 isoform A/Nogo-A; the interaction results in enhanced RTN4-mediated inhibition of AMPA receptor clustering. Also interacts with NCAM1, RANBP2 and CCT8. Post-translationally, rapidly degraded by proteolysis following neuronal stimulation, resulting in increased AMPA receptor clustering.

It localises to the synapse. It is found in the synaptic cleft. In terms of biological role, negatively regulates long-term potentiation and modulates adult synaptic plasticity. Stabilizes the interaction of RTN4 isoform A/Nogo-A with its receptors, inhibiting clustering of postsynaptic AMPA receptors at synaptic sites. Upon neuronal stimulation, degraded at synapses, reducing RTN4 signaling and allowing AMPA receptor clustering at individual synapses. This is Synaptic plasticity regulator PANTS from Pongo abelii (Sumatran orangutan).